Consider the following 466-residue polypeptide: MPEKGTVVMSRYELGRSLGHGTFSKVYQARSLVSGETVAVKVIDKEKALRAGAGMVDQIEREVAVMRLVGRHPNVVRLHEVMASRSKIYFVMELVRGGELLARLVAGGGRLGEDAARRYFHQLVAAVDFCHSRGVYHRDLKPENLLVDDDGSGGGGNLKVTDFGLSALSASRRHDGLLHTTCGTPSYVAPEIIGDKGYDGATADVWSCGVILFLLLAGYLPFFDSNLMEMYKKITNGEFKVPDWFTPDARSLISRLLDPNPTTRITIDELVKHPWFKKGHTKRPASSNTMKLNEEEKPANAAMNMKPASLNAFDIISLSQGFDLSGMFCCHGHSSRTQDQLFVTGKPATAIVSRLEEIAETEHFTVKKKQKKRQEEDGMAVKLQGWKEGRKGQLAIDAEIFEVSPSCYVVEVKKTAGDTLEYQAFCNRDLRPSLNDICWTSPATAASEKNQLPAVSEVSPLSSPRN.

In terms of domain architecture, Protein kinase spans Tyr12–Phe276. Residues Leu18–Val26 and Lys41 each bind ATP. Residue Asp139 is the Proton acceptor of the active site. Residues Asp162–Glu191 are activation loop. The NAF domain maps to Lys297–Cys329. The segment at Thr337–Val366 is PPI. Positions Ala446–Asn466 are disordered.

Belongs to the protein kinase superfamily. CAMK Ser/Thr protein kinase family. SNF1 subfamily. Mn(2+) serves as cofactor.

It carries out the reaction L-seryl-[protein] + ATP = O-phospho-L-seryl-[protein] + ADP + H(+). It catalyses the reaction L-threonyl-[protein] + ATP = O-phospho-L-threonyl-[protein] + ADP + H(+). In terms of biological role, CIPK serine-threonine protein kinases interact with CBL proteins. Binding of a CBL protein to the regulatory NAF domain of CIPK protein lead to the activation of the kinase in a calcium-dependent manner. The protein is CBL-interacting protein kinase 20 (CIPK20) of Oryza sativa subsp. japonica (Rice).